The chain runs to 328 residues: Beta-ketoacyl-[acyl-carrier-protein] synthase III (328 aa).

Active-site residues include C113 and H253. The segment at 254–258 (QANLR) is ACP-binding. The active site involves N283.

The protein belongs to the thiolase-like superfamily. FabH family. Homodimer.

The protein resides in the cytoplasm. The enzyme catalyses malonyl-[ACP] + acetyl-CoA + H(+) = 3-oxobutanoyl-[ACP] + CO2 + CoA. The protein operates within lipid metabolism; fatty acid biosynthesis. In terms of biological role, catalyzes the condensation reaction of fatty acid synthesis by the addition to an acyl acceptor of two carbons from malonyl-ACP. Catalyzes the first condensation reaction which initiates fatty acid synthesis and may therefore play a role in governing the total rate of fatty acid production. Possesses both acetoacetyl-ACP synthase and acetyl transacylase activities. Its substrate specificity determines the biosynthesis of branched-chain and/or straight-chain of fatty acids. This is Beta-ketoacyl-[acyl-carrier-protein] synthase III from Fusobacterium nucleatum subsp. nucleatum (strain ATCC 25586 / DSM 15643 / BCRC 10681 / CIP 101130 / JCM 8532 / KCTC 2640 / LMG 13131 / VPI 4355).